Here is a 103-residue protein sequence, read N- to C-terminus: Transcription factor S (103 aa).

Residues C4, C7, C20, C23, C64, C67, C92, and C95 each contribute to the Zn(2+) site. The C4-type zinc-finger motif lies at 4-23; it reads CPKCKSLMIYQGDKLVCRKC. The TFIIS-type zinc finger occupies 60-100; sequence TKAICPACGHNEAFWWLRQLRAADESEVRFFRCTKCGKTWR.

This sequence belongs to the archaeal RpoM/eukaryotic RPA12/RPB9/RPC11 RNA polymerase family.

Its function is as follows. Induces RNA cleavage activity in the RNA polymerase. In its presence, the cleavage activity of the RNA polymerase truncates the RNA back to position +15 in a stepwise manner by releasing mainly dinucleotides from the 3'-end of the nascent RNA. The truncated RNAs are able to continue elongation. Involved in transcriptional proofreading and fidelity. Misincorporation of nucleotides during elongation of transcription leads to arrested elongation complexes which are rescued by TFS-promoted removal of a dinucleotide from the 3'-end. TFS is able to induce a cleavage resynthesis cycle in stalled elongation complexes (resulting from the next missing nucleotide or a reduced incorporation rate of a wrong nucleotide) preventing misincorporation and enabling proofreading in a post-incorporation manner. Pausing of elongation complexes is the main determinant of TFS-induced RNA cleavage. The protein is Transcription factor S of Archaeoglobus fulgidus (strain ATCC 49558 / DSM 4304 / JCM 9628 / NBRC 100126 / VC-16).